The following is a 358-amino-acid chain: Putative zinc metalloprotease BH06270 (358 aa).

Residue His-7 coordinates Zn(2+). Residue Glu-8 is part of the active site. His-11 contributes to the Zn(2+) binding site. The next 3 helical transmembrane spans lie at 89–111 (ATVF…FFFF), 282–304 (FLSL…LFPI), and 332–354 (IIFR…NDYF). One can recognise a PDZ domain in the interval 102 to 177 (TVVILTFFFF…IEFKMERSGQ (76 aa)).

It belongs to the peptidase M50B family. Zn(2+) serves as cofactor.

The protein resides in the cell inner membrane. This Bartonella henselae (strain ATCC 49882 / DSM 28221 / CCUG 30454 / Houston 1) (Rochalimaea henselae) protein is Putative zinc metalloprotease BH06270.